The primary structure comprises 222 residues: Superoxide dismutase [Mn], mitochondrial (222 aa).

The transit peptide at 1–24 (MLSRAACSTSRRLVPALSVLGSRQ) directs the protein to the mitochondrion. A Mn(2+)-binding site is contributed by His-50. Tyr-58 bears the 3'-nitrotyrosine mark. 2 positions are modified to N6-acetyllysine; alternate: Lys-68 and Lys-75. An N6-succinyllysine; alternate mark is found at Lys-68 and Lys-75. His-98 provides a ligand contact to Mn(2+). 2 positions are modified to N6-acetyllysine; alternate: Lys-122 and Lys-130. N6-succinyllysine; alternate occurs at positions 122 and 130. Asp-183 and His-187 together coordinate Mn(2+). Position 202 is an N6-acetyllysine (Lys-202).

The protein belongs to the iron/manganese superoxide dismutase family. In terms of assembly, homotetramer. It depends on Mn(2+) as a cofactor. Nitrated under oxidative stress. Nitration coupled with oxidation inhibits the catalytic activity. In terms of processing, acetylation at Lys-122 decreases enzymatic activity. Deacetylated by SIRT3 upon exposure to ionizing radiations or after long fasting. Post-translationally, polyubiquitinated; leading to proteasomal degradation. Deubiquitinated by USP36 which increases protein stability.

The protein localises to the mitochondrion matrix. It carries out the reaction 2 superoxide + 2 H(+) = H2O2 + O2. In terms of biological role, destroys superoxide anion radicals which are normally produced within the cells and which are toxic to biological systems. This is Superoxide dismutase [Mn], mitochondrial (SOD2) from Bos taurus (Bovine).